The sequence spans 353 residues: MTIAVGKFTKDENDLFDIMDDWLRRDRFVFVGWSGLLLFPCAYFAVGGWFTGTTFVTSWYTHGLASSYLEGCNFLTAAVSTPANSLAHSLLLLWGPEAQGDFTRWCQLGGLWTFVALHGAFGLIGFMLRQFELARSVQLRPYNAIAFSGPIAVFVSVFLIYPLGQSGWFFAPSFGVAAIFRFILFFQGFHNWTLNPFHMMGVAGVLGAALLCAIHGATVENTLFEDGDGANTFRAFNPTQAEETYSMVTANRFWSQIFGVAFSNKRWLHFFMLFVPVTGLWMSALGVVGLALNLRAYDFVSQEIRAAEDPEFETFYTKNILLNEGIRAWMAAQDQPHENLIFPEEVLPRGNAL.

N-acetylthreonine is present on T2. Position 2 is a phosphothreonine (T2). Residues 41–61 (CAYFAVGGWFTGTTFVTSWYT) traverse the membrane as a helical segment. Chlorophyll a is bound at residue H118. Residues 125 to 141 (GFMLRQFELARSVQLRP) traverse the membrane as a helical segment. Positions 130 and 143 each coordinate pheophytin a. The chain crosses the membrane as a helical span at residues 153-166 (VFVSVFLIYPLGQS). H198 serves as a coordination point for chlorophyll a. A helical membrane pass occupies residues 208-228 (AALLCAIHGATVENTLFEDGD). H215 and F262 together coordinate a plastoquinone. H215 serves as a coordination point for Fe cation. H269 lines the Fe cation pocket. Residues 279–295 (GLWMSALGVVGLALNLR) form a helical membrane-spanning segment.

Belongs to the reaction center PufL/M/PsbA/D family. As to quaternary structure, PSII is composed of 1 copy each of membrane proteins PsbA, PsbB, PsbC, PsbD, PsbE, PsbF, PsbH, PsbI, PsbJ, PsbK, PsbL, PsbM, PsbT, PsbX, PsbY, PsbZ, Psb30/Ycf12, at least 3 peripheral proteins of the oxygen-evolving complex and a large number of cofactors. It forms dimeric complexes. The D1/D2 heterodimer binds P680, chlorophylls that are the primary electron donor of PSII, and subsequent electron acceptors. It shares a non-heme iron and each subunit binds pheophytin, quinone, additional chlorophylls, carotenoids and lipids. There is also a Cl(-1) ion associated with D1 and D2, which is required for oxygen evolution. The PSII complex binds additional chlorophylls, carotenoids and specific lipids. serves as cofactor.

It is found in the plastid. Its subcellular location is the chloroplast thylakoid membrane. It catalyses the reaction 2 a plastoquinone + 4 hnu + 2 H2O = 2 a plastoquinol + O2. Photosystem II (PSII) is a light-driven water:plastoquinone oxidoreductase that uses light energy to abstract electrons from H(2)O, generating O(2) and a proton gradient subsequently used for ATP formation. It consists of a core antenna complex that captures photons, and an electron transfer chain that converts photonic excitation into a charge separation. The D1/D2 (PsbA/PsbD) reaction center heterodimer binds P680, the primary electron donor of PSII as well as several subsequent electron acceptors. D2 is needed for assembly of a stable PSII complex. The protein is Photosystem II D2 protein of Cucumis sativus (Cucumber).